Consider the following 229-residue polypeptide: Urease accessory protein UreF (229 aa).

Belongs to the UreF family. In terms of assembly, ureD, UreF and UreG form a complex that acts as a GTP-hydrolysis-dependent molecular chaperone, activating the urease apoprotein by helping to assemble the nickel containing metallocenter of UreC. The UreE protein probably delivers the nickel.

Its subcellular location is the cytoplasm. In terms of biological role, required for maturation of urease via the functional incorporation of the urease nickel metallocenter. This chain is Urease accessory protein UreF, found in Trichormus variabilis (strain ATCC 29413 / PCC 7937) (Anabaena variabilis).